A 315-amino-acid chain; its full sequence is Kinetochore protein SPC25 homolog (315 aa).

Met1 carries the N-acetylmethionine modification. A coiled-coil region spans residues Thr57–Arg91. The interval Ala261–Lys315 is disordered. Polar residues predominate over residues Phe266 to Pro275. Residues Ser280 to Lys289 are compositionally biased toward basic residues.

This sequence belongs to the SPC25 family. As to quaternary structure, component of the NDC80 complex, which consists of NDC80, NUF2, SPC24 and SPC25.

It localises to the chromosome. The protein localises to the centromere. Acts as a component of the essential kinetochore-associated NDC80 complex, which is required for chromosome segregation and spindle checkpoint activity to ensure proper cell division. This chain is Kinetochore protein SPC25 homolog, found in Arabidopsis thaliana (Mouse-ear cress).